The primary structure comprises 316 residues: Acetaldehyde dehydrogenase (316 aa).

11-14 (SGNI) contacts NAD(+). The Acyl-thioester intermediate role is filled by C131. Residues 162–170 (SAGPGTRAN) and N289 each bind NAD(+).

It belongs to the acetaldehyde dehydrogenase family. Interacts with MhpE.

It catalyses the reaction acetaldehyde + NAD(+) + CoA = acetyl-CoA + NADH + H(+). The protein operates within aromatic compound metabolism; 3-phenylpropanoate degradation. In terms of biological role, catalyzes the conversion of acetaldehyde to acetyl-CoA, using NAD(+) and coenzyme A. Is the final enzyme in the meta-cleavage pathway for the degradation of aromatic compounds. The polypeptide is Acetaldehyde dehydrogenase (Escherichia coli O81 (strain ED1a)).